We begin with the raw amino-acid sequence, 507 residues long: MVSATSASPADGRRVALLTLGCARNEVDSEELAARLHADGWQVTTDGEGAEVVVVNTCGFVEKAKQDSIQTLLAAAETGAKVVAAGCMAERYGRELADSLPEAQAVLSFDDYPDISDRLGAVLAGTAIDAHTPRDRRELLPLTPVRRREAAVSLPGHGTRAAAAGPGGRSAPVEVDEHTPAHLRPVLRRRLDTGPVASLKLASGCDRRCAFCAIPAFRGAFVSRPPEELLAEAEWLARTGVRELVLVSENSSSYGKDLGDPRALEKLLPQLAAVDGIVRVRASYLQPAETRPGLVEAIATTPGVAAYFDLSFQHSSEPVLRRMRRFGSTERFLDLLASVRALAPEAGARSNFIVGFPGETRADVAELVRFLNEARLDAIGVFDYSDEDGTEAAGLSGKVSATTVKRRYDRLGALADELCAQRAEQRLGSTVQVLVDSVDDGVVEGRAAHQAPEVDGSTTLVAPSGGGVDLAALRPGDLVRCTVTATEGVDLVAVPDGMISAAPGVAR.

The region spanning 13–124 (RRVALLTLGC…ISDRLGAVLA (112 aa)) is the MTTase N-terminal domain. Residues Cys-22, Cys-58, and Cys-87 each contribute to the [4Fe-4S] cluster site. The interval 150 to 175 (AAVSLPGHGTRAAAAGPGGRSAPVEV) is disordered. Low complexity predominate over residues 155-172 (PGHGTRAAAAGPGGRSAP). In terms of domain architecture, Radical SAM core spans 191–422 (LDTGPVASLK…ALADELCAQR (232 aa)). [4Fe-4S] cluster-binding residues include Cys-205, Cys-209, and Cys-212. Residues 424–497 (EQRLGSTVQV…GVDLVAVPDG (74 aa)) enclose the TRAM domain.

The protein belongs to the methylthiotransferase family. RimO subfamily. Requires [4Fe-4S] cluster as cofactor.

The protein resides in the cytoplasm. The catalysed reaction is L-aspartate(89)-[ribosomal protein uS12]-hydrogen + (sulfur carrier)-SH + AH2 + 2 S-adenosyl-L-methionine = 3-methylsulfanyl-L-aspartate(89)-[ribosomal protein uS12]-hydrogen + (sulfur carrier)-H + 5'-deoxyadenosine + L-methionine + A + S-adenosyl-L-homocysteine + 2 H(+). In terms of biological role, catalyzes the methylthiolation of an aspartic acid residue of ribosomal protein uS12. This chain is Ribosomal protein uS12 methylthiotransferase RimO, found in Salinispora arenicola (strain CNS-205).